The sequence spans 69 residues: Photosystem I reaction center subunit IV (69 aa).

The protein belongs to the PsaE family.

Its subcellular location is the cellular thylakoid membrane. Stabilizes the interaction between PsaC and the PSI core, assists the docking of the ferredoxin to PSI and interacts with ferredoxin-NADP oxidoreductase. In Prochlorococcus marinus (strain MIT 9215), this protein is Photosystem I reaction center subunit IV.